The sequence spans 240 residues: Uridylate kinase (240 aa).

14–17 (KLSG) contacts ATP. Position 56 (Gly56) interacts with UMP. ATP is bound by residues Gly57 and Arg61. Residues Asp76 and 137–144 (TGNPFFTT) each bind UMP. Residues Thr164, Tyr170, and Asp173 each contribute to the ATP site.

The protein belongs to the UMP kinase family. As to quaternary structure, homohexamer.

Its subcellular location is the cytoplasm. It carries out the reaction UMP + ATP = UDP + ADP. Its pathway is pyrimidine metabolism; CTP biosynthesis via de novo pathway; UDP from UMP (UMPK route): step 1/1. With respect to regulation, inhibited by UTP. Catalyzes the reversible phosphorylation of UMP to UDP. This Verminephrobacter eiseniae (strain EF01-2) protein is Uridylate kinase.